We begin with the raw amino-acid sequence, 700 residues long: Elongation factor G (700 aa).

The tr-type G domain occupies 8–290 (ERYRNIGISA…AVIDYLPSPV (283 aa)). GTP is bound by residues 17 to 24 (AHIDAGKT), 88 to 92 (DTPGH), and 142 to 145 (NKMD).

The protein belongs to the TRAFAC class translation factor GTPase superfamily. Classic translation factor GTPase family. EF-G/EF-2 subfamily.

The protein resides in the cytoplasm. Catalyzes the GTP-dependent ribosomal translocation step during translation elongation. During this step, the ribosome changes from the pre-translocational (PRE) to the post-translocational (POST) state as the newly formed A-site-bound peptidyl-tRNA and P-site-bound deacylated tRNA move to the P and E sites, respectively. Catalyzes the coordinated movement of the two tRNA molecules, the mRNA and conformational changes in the ribosome. This is Elongation factor G from Paracidovorax citrulli (strain AAC00-1) (Acidovorax citrulli).